Consider the following 1497-residue polypeptide: ABC multidrug transporter C (1497 aa).

Polar residues predominate over residues 1–13; sequence MSLLGTINPNINP. Positions 1-21 are disordered; it reads MSLLGTINPNINPERTVAGRG. 2 N-linked (GlcNAc...) asparagine glycosylation sites follow: Asn-137 and Asn-336. The ABC transporter 1 domain maps to 158–412; that stretch reads LEVGTLVRRI…FTNMGFECPE (255 aa). 5 consecutive transmembrane segments (helical) span residues 523–543, 557–577, 599–621, 632–652, and 665–685; these read LTMS…SVFY, ALLF…ILTL, AIAS…NLTL, GAFF…SMLF, and ALVP…FTIP. Asn-762 carries N-linked (GlcNAc...) asparagine glycosylation. A helical transmembrane segment spans residues 777–797; that stretch reads GIMFGFMFFFMFTYLTATEYI. A disordered region spans residues 815-843; the sequence is QPTGSHDVEKSPEVSSAAKTDEASSKEAT. The 244-residue stretch at 853–1096 folds into the ABC transporter 2 domain; the sequence is FQWKDVCYDI…LASYFERNGA (244 aa). Residue 889 to 896 coordinates ATP; the sequence is GVSGAGKT. Helical transmembrane passes span 1192–1212, 1226–1246, 1273–1293, 1313–1333, and 1352–1372; these read YIYS…FSFF, FSIF…MPNF, IIVE…CWYY, LMFL…HMMI, and LCLI…FWIF. The N-linked (GlcNAc...) asparagine glycan is linked to Asn-1411. Residues 1464-1484 traverse the membrane as a helical segment; the sequence is FGIMWAYIIFNIFAAVFIYWL.

This sequence belongs to the ABC transporter superfamily. ABCG family. PDR (TC 3.A.1.205) subfamily.

The protein localises to the cell membrane. The catalysed reaction is fluconazole(in) + ATP + H2O = fluconazole(out) + ADP + phosphate + H(+). The enzyme catalyses itraconazole(in) + ATP + H2O = itraconazole(out) + ADP + phosphate + H(+). It catalyses the reaction voriconazole(in) + ATP + H2O = voriconazole(out) + ADP + phosphate + H(+). The efflux inhibitor FK506 impairs the transport activity. Pleiotropic ABC efflux transporter that shows a strong substrate specificity for the azole class of drugs such as lotrimazole (CLT), fluconazole (FLC), itraconazole (ITC), ketoconazole (KTC), posaconazole (POS), tebuconazole (TEBZ), and voriconazole (VRC). Is also able to transport rhodamine 6G (R-6G), a known substrate for many ABC transporters. Required for normal pathogenesis in a Galleria mellonella (greater wax moth) infection model. This chain is ABC multidrug transporter C, found in Aspergillus fumigatus (strain ATCC MYA-4609 / CBS 101355 / FGSC A1100 / Af293) (Neosartorya fumigata).